A 556-amino-acid polypeptide reads, in one-letter code: Sensory neuron membrane protein 2 (556 aa).

Over 1–6 the chain is Cytoplasmic; that stretch reads MIHWSL. The helical transmembrane segment at 7 to 27 threads the bilayer; the sequence is IVSALGVCVAVLGGYCGWILF. At 28 to 522 the chain is on the extracellular side; sequence PNMVHKKVEQ…KLINTLKTLN (495 aa). Residues asparagine 66, asparagine 274, asparagine 310, and asparagine 324 are each glycosylated (N-linked (GlcNAc...) asparagine). 2 disulfide bridges follow: cysteine 320–cysteine 388 and cysteine 349–cysteine 415. The helical transmembrane segment at 523–543 threads the bilayer; the sequence is IVHWATLCGGIGVAVACLIYY. At 544–556 the chain is on the cytoplasmic side; it reads IYQRGRVVEPPVK.

It belongs to the CD36 family. In terms of tissue distribution, detected in the head and to a lesser extent in legs and wings.

The protein resides in the cell membrane. Plays an olfactory role that is not restricted to pheromone sensitivity. The protein is Sensory neuron membrane protein 2 of Drosophila melanogaster (Fruit fly).